We begin with the raw amino-acid sequence, 300 residues long: N-acetylmuramic acid 6-phosphate etherase (300 aa).

Residues 57 to 220 (VSAAFARQGR…SSAAMIRSGK (164 aa)) form the SIS domain. Glu-85 acts as the Proton donor in catalysis. Residue Glu-116 is part of the active site.

This sequence belongs to the GCKR-like family. MurNAc-6-P etherase subfamily. As to quaternary structure, homodimer.

It catalyses the reaction N-acetyl-D-muramate 6-phosphate + H2O = N-acetyl-D-glucosamine 6-phosphate + (R)-lactate. It participates in amino-sugar metabolism; N-acetylmuramate degradation. It functions in the pathway amino-sugar metabolism; 1,6-anhydro-N-acetylmuramate degradation. The protein operates within cell wall biogenesis; peptidoglycan recycling. Functionally, specifically catalyzes the cleavage of the D-lactyl ether substituent of MurNAc 6-phosphate, producing GlcNAc 6-phosphate and D-lactate. Together with AnmK, is also required for the utilization of anhydro-N-acetylmuramic acid (anhMurNAc) either imported from the medium or derived from its own cell wall murein, and thus plays a role in cell wall recycling. This is N-acetylmuramic acid 6-phosphate etherase from Edwardsiella ictaluri (strain 93-146).